Here is a 701-residue protein sequence, read N- to C-terminus: Elongation factor G (701 aa).

One can recognise a tr-type G domain in the interval 8–290 (SLYRNIGISA…AVIDYLPAPT (283 aa)). GTP contacts are provided by residues 17 to 24 (AHIDAGKT), 88 to 92 (DTPGH), and 142 to 145 (NKMD).

Belongs to the TRAFAC class translation factor GTPase superfamily. Classic translation factor GTPase family. EF-G/EF-2 subfamily.

Its subcellular location is the cytoplasm. Catalyzes the GTP-dependent ribosomal translocation step during translation elongation. During this step, the ribosome changes from the pre-translocational (PRE) to the post-translocational (POST) state as the newly formed A-site-bound peptidyl-tRNA and P-site-bound deacylated tRNA move to the P and E sites, respectively. Catalyzes the coordinated movement of the two tRNA molecules, the mRNA and conformational changes in the ribosome. This chain is Elongation factor G, found in Haemophilus ducreyi (strain 35000HP / ATCC 700724).